Here is a 400-residue protein sequence, read N- to C-terminus: Glutamyl-tRNA reductase (400 aa).

Residues 45–48 (TCNR), serine 103, 108–110 (EDQ), and glutamine 114 each bind substrate. The active-site Nucleophile is cysteine 46. 179–184 (GYGEIG) provides a ligand contact to NADP(+).

It belongs to the glutamyl-tRNA reductase family. In terms of assembly, homodimer.

The enzyme catalyses (S)-4-amino-5-oxopentanoate + tRNA(Glu) + NADP(+) = L-glutamyl-tRNA(Glu) + NADPH + H(+). The protein operates within porphyrin-containing compound metabolism; protoporphyrin-IX biosynthesis; 5-aminolevulinate from L-glutamyl-tRNA(Glu): step 1/2. Functionally, catalyzes the NADPH-dependent reduction of glutamyl-tRNA(Glu) to glutamate 1-semialdehyde (GSA). This is Glutamyl-tRNA reductase from Clostridium perfringens (strain 13 / Type A).